The chain runs to 794 residues: MVRHFKMQIFGDRQPGYDGKRNMYTAHPLPIGRDRVDMEVTLPGEGKDQTFKVSIQWVSVVSLQLLLEALAGHLNEVPEDSVQALDVITRHLPSMRYTPVGRSFFSPPEGYYHPLGGGREVWFGFHQSVRPAMWNMMLNIDVSATAFYRAQPIIEFMCEVLDIQNINEQTKPLTDSQRVKFTKEIRGLKVEVTHCGQMKRKYRVCNVTRRPASHQTFPLQLENGQAMECTVAQYFKQKYSLQLKYPHLPCLQVGQEQKHTYLPLEVCNIVAGQRCIKKLTDNQTSTMIKATARSAPDRQEEISRLVKSNSMVGGPDPYLKEFGIVVHNEMTELTGRVLPAPMLQYGGRNKTVATPNQGVWDMRGKQFYAGIEIKVWAVACFAPQKQCREDLLKSFTDQLRKISKDAGMPIQGQPCFCKYAQGADSVEPMFKHLKLTYVGLQLIVVILPGKTPVYAEVKRVGDTLLGMATQCVQVKNVVKTSPQTLSNLCLKINAKLGGINNVLVPHQRPSVFQQPVIFLGADVTHPPAGDGKKPSIAAVVGSMDGHPSRYCATVRVQTSRQETSQELLYSQEVIQDLTNMVRELLIQFYKSTRFKPTRIIYYRGGVSEGQMKQVAWPELIAIRKACISLEEDYRPGITYIVVQKRHHTRLFCADKTERVGKSGNVPAGTTVDSTITHPSEFDFYLCSHAGIQGTSRPSHYQVLWDDNCFTADELQLLTYQLCHTYVRCTRSVSIPAPAYYARLVAFRARYHLVDKDHDSAEGSHVSGQSNGRDPQALAKAVQIHHDTQHTMYFA.

Residues 152–271 form the PAZ domain; that stretch reads PIIEFMCEVL…LPLEVCNIVA (120 aa). In terms of domain architecture, Piwi spans 442–753; it reads LIVVILPGKT…VAFRARYHLV (312 aa). Residues 758 to 779 form a disordered region; the sequence is DSAEGSHVSGQSNGRDPQALAK.

The protein belongs to the argonaute family. Ago subfamily.

Its subcellular location is the cytoplasm. The protein resides in the P-body. Its function is as follows. Required for RNA-mediated gene silencing (RNAi). Binds to short RNAs such as microRNAs (miRNAs) and represses the translation of mRNAs which are complementary to them. Lacks endonuclease activity and does not appear to cleave target mRNAs. This is Protein argonaute-4 (AGO4) from Gallus gallus (Chicken).